Reading from the N-terminus, the 216-residue chain is Ras-related protein Rab-2B (216 aa).

GTP-binding residues include G16, V17, G18, K19, S20, C21, and T38. Residue S20 participates in Mg(2+) binding. The Switch 1 signature appears at 37 to 42 (LTIGVE). The Mg(2+) site is built by T38 and D61. The short motif at 63–72 (AGQESFRSIT) is the Switch 2 element. GTP is bound by residues G64, N119, K120, D122, A150, and K151. Residues 189-207 (PQQSITSSVGPCSPQQNVS) show a composition bias toward polar residues. The disordered stretch occupies residues 189-216 (PQQSITSSVGPCSPQQNVSDIGPDSGCC). S-geranylgeranyl cysteine attachment occurs at residues C215 and C216.

The protein belongs to the small GTPase superfamily. Rab family. As to quaternary structure, interacts (in GTP-bound form) with GARIN4 (via N-terminus). Interacts (in GTP-bound form) with GARIN5A. Interacts (in GTP-bound form) with GARIN1B. Interacts with VPS39 and VPS41. Mg(2+) serves as cofactor.

It is found in the cell membrane. It localises to the endoplasmic reticulum membrane. The protein resides in the golgi apparatus membrane. The protein localises to the cytoplasmic vesicle. Its subcellular location is the secretory vesicle. It is found in the acrosome. It localises to the autophagosome membrane. The catalysed reaction is GTP + H2O = GDP + phosphate + H(+). Its activity is regulated as follows. Regulated by guanine nucleotide exchange factors (GEFs) which promote the exchange of bound GDP for free GTP, GTPase activating proteins (GAPs) which increase the GTP hydrolysis activity, and GDP dissociation inhibitors (GDIs) which inhibit the dissociation of the nucleotide from the GTPase. The small GTPases Rab are key regulators of intracellular membrane trafficking, from the formation of transport vesicles to their fusion with membranes. Rabs cycle between active GTP-bound and inactive GDP-bound states. In their active state, drive transport of vesicular carriers from donor organelles to acceptor organelles to regulate the membrane traffic that maintains organelle identity and morphology. Regulates the compacted morphology of the Golgi. Promotes cytosolic DNA-induced innate immune responses. Regulates IFN responses against DNA viruses by regulating the CGAS-STING signaling axis. Together with RAB2A redundantly required for efficient autophagic flux. This chain is Ras-related protein Rab-2B (Rab2b), found in Mus musculus (Mouse).